The sequence spans 371 residues: tRNA-specific 2-thiouridylase MnmA (371 aa).

ATP contacts are provided by residues 13 to 20 (GMSGGVDS) and Met-39. The segment at 99-101 (NPD) is interaction with target base in tRNA. The active-site Nucleophile is Cys-104. Cys-104 and Cys-200 form a disulfide bridge. Gly-128 provides a ligand contact to ATP. Residues 150-152 (KDQ) are interaction with tRNA. Cys-200 functions as the Cysteine persulfide intermediate in the catalytic mechanism. An interaction with tRNA region spans residues 308-309 (RY).

It belongs to the MnmA/TRMU family.

The protein resides in the cytoplasm. The catalysed reaction is S-sulfanyl-L-cysteinyl-[protein] + uridine(34) in tRNA + AH2 + ATP = 2-thiouridine(34) in tRNA + L-cysteinyl-[protein] + A + AMP + diphosphate + H(+). In terms of biological role, catalyzes the 2-thiolation of uridine at the wobble position (U34) of tRNA, leading to the formation of s(2)U34. The sequence is that of tRNA-specific 2-thiouridylase MnmA from Bacillus cereus (strain ATCC 10987 / NRS 248).